A 284-amino-acid polypeptide reads, in one-letter code: HTH-type transcriptional activator RhaR (284 aa).

An HTH araC/xylS-type domain is found at 181-279 (DMLMNALRAS…GVSPSAYRQR (99 aa)). DNA-binding regions (H-T-H motif) lie at residues 198-219 (EAFC…KEQT) and 246-269 (IGDI…HQAF).

In terms of assembly, binds DNA as a dimer.

The protein resides in the cytoplasm. Activates expression of the rhaSR operon in response to L-rhamnose. The chain is HTH-type transcriptional activator RhaR from Pectobacterium carotovorum subsp. carotovorum (strain PC1).